A 187-amino-acid chain; its full sequence is UPF0301 protein Cpar_0662 (187 aa).

The protein belongs to the UPF0301 (AlgH) family.

This is UPF0301 protein Cpar_0662 from Chlorobaculum parvum (strain DSM 263 / NCIMB 8327) (Chlorobium vibrioforme subsp. thiosulfatophilum).